Here is a 276-residue protein sequence, read N- to C-terminus: NAD kinase (276 aa).

The active-site Proton acceptor is the Asp-61. NAD(+) is bound by residues 61–62, Arg-66, 135–136, Arg-146, His-163, Asp-165, and Ala-200; these read DG and NE.

The protein belongs to the NAD kinase family. Requires a divalent metal cation as cofactor.

The protein resides in the cytoplasm. The catalysed reaction is NAD(+) + ATP = ADP + NADP(+) + H(+). Involved in the regulation of the intracellular balance of NAD and NADP, and is a key enzyme in the biosynthesis of NADP. Catalyzes specifically the phosphorylation on 2'-hydroxyl of the adenosine moiety of NAD to yield NADP. This chain is NAD kinase, found in Chloroflexus aggregans (strain MD-66 / DSM 9485).